A 340-amino-acid polypeptide reads, in one-letter code: DNA-directed RNA polymerase subunit alpha (340 aa).

The interval 1–236 is alpha N-terminal domain (alpha-NTD); sequence MLSLSKNWNT…EQLQLFISFE (236 aa). Positions 251 to 340 are alpha C-terminal domain (alpha-CTD); the sequence is FSPYLLKRVD…LSKRYEDSYN (90 aa).

The protein belongs to the RNA polymerase alpha chain family. As to quaternary structure, homodimer. The RNAP catalytic core consists of 2 alpha, 1 beta, 1 beta' and 1 omega subunit. When a sigma factor is associated with the core the holoenzyme is formed, which can initiate transcription.

The catalysed reaction is RNA(n) + a ribonucleoside 5'-triphosphate = RNA(n+1) + diphosphate. In terms of biological role, DNA-dependent RNA polymerase catalyzes the transcription of DNA into RNA using the four ribonucleoside triphosphates as substrates. This Rickettsia rickettsii (strain Iowa) protein is DNA-directed RNA polymerase subunit alpha.